The chain runs to 874 residues: Probable inorganic carbon transporter subunit DabA (874 aa).

The Zn(2+) site is built by Cys-398, Asp-400, His-580, and Cys-595.

This sequence belongs to the inorganic carbon transporter (TC 9.A.2) DabA family. As to quaternary structure, forms a complex with DabB. Zn(2+) is required as a cofactor.

The protein resides in the cell membrane. In terms of biological role, part of an energy-coupled inorganic carbon pump. The protein is Probable inorganic carbon transporter subunit DabA of Bacillus cereus (strain 03BB102).